The chain runs to 760 residues: 5-methyltetrahydropteroyltriglutamate--homocysteine methyltransferase (760 aa).

Residues 15–18 and lysine 114 each bind 5-methyltetrahydropteroyltri-L-glutamate; that span reads RELK. L-homocysteine is bound by residues 436-438 and glutamate 489; that span reads IGS. L-methionine is bound by residues 436-438 and glutamate 489; that span reads IGS. 5-methyltetrahydropteroyltri-L-glutamate contacts are provided by residues 520–521 and tryptophan 566; that span reads RC. An L-homocysteine-binding site is contributed by aspartate 604. Aspartate 604 provides a ligand contact to L-methionine. Glutamate 610 contacts 5-methyltetrahydropteroyltri-L-glutamate. Zn(2+) is bound by residues histidine 646, cysteine 648, and glutamate 670. The active-site Proton donor is the histidine 699. Cysteine 731 contributes to the Zn(2+) binding site.

This sequence belongs to the vitamin-B12 independent methionine synthase family. Zn(2+) serves as cofactor.

It catalyses the reaction 5-methyltetrahydropteroyltri-L-glutamate + L-homocysteine = tetrahydropteroyltri-L-glutamate + L-methionine. The protein operates within amino-acid biosynthesis; L-methionine biosynthesis via de novo pathway; L-methionine from L-homocysteine (MetE route): step 1/1. In terms of biological role, catalyzes the transfer of a methyl group from 5-methyltetrahydrofolate to homocysteine resulting in methionine formation. This chain is 5-methyltetrahydropteroyltriglutamate--homocysteine methyltransferase, found in Shewanella oneidensis (strain ATCC 700550 / JCM 31522 / CIP 106686 / LMG 19005 / NCIMB 14063 / MR-1).